Here is a 131-residue protein sequence, read N- to C-terminus: MTAKTEEILDSLKSLSLLEASELVKQIEEAFGVSAAASAGVVMAAPGAGGGDGDGGAAEEKTEFDVILESFDAAAKIKVLKVVRNATGLGLGDAKALVESAPKTVKEGIAKADAETLKKEIEEAGGKVTLK.

This sequence belongs to the bacterial ribosomal protein bL12 family. As to quaternary structure, homodimer. Part of the ribosomal stalk of the 50S ribosomal subunit. Forms a multimeric L10(L12)X complex, where L10 forms an elongated spine to which 2 to 4 L12 dimers bind in a sequential fashion. Binds GTP-bound translation factors.

Forms part of the ribosomal stalk which helps the ribosome interact with GTP-bound translation factors. Is thus essential for accurate translation. In Prochlorococcus marinus subsp. pastoris (strain CCMP1986 / NIES-2087 / MED4), this protein is Large ribosomal subunit protein bL12.